Reading from the N-terminus, the 329-residue chain is Minor capsid protein A1 (329 aa).

The segment at 143 to 162 is disordered; sequence GPSPVPGPNPDPPLEPPPGT. Residues 145–161 are compositionally biased toward pro residues; sequence SPVPGPNPDPPLEPPPG.

It is found in the virion. Its function is as follows. Minor capsid protein. This is Minor capsid protein A1 from Qbeta virus (strain MX1).